Here is a 658-residue protein sequence, read N- to C-terminus: Probable Xaa-Pro aminopeptidase P (658 aa).

Residues Asp449, Asp460, Glu558, and Glu572 each contribute to the Mn(2+) site.

It belongs to the peptidase M24B family. Mn(2+) serves as cofactor.

It catalyses the reaction Release of any N-terminal amino acid, including proline, that is linked to proline, even from a dipeptide or tripeptide.. Its function is as follows. Catalyzes the removal of a penultimate prolyl residue from the N-termini of peptides. The polypeptide is Probable Xaa-Pro aminopeptidase P (ampp) (Aspergillus clavatus (strain ATCC 1007 / CBS 513.65 / DSM 816 / NCTC 3887 / NRRL 1 / QM 1276 / 107)).